A 310-amino-acid polypeptide reads, in one-letter code: Carbamate kinase 1 (310 aa).

In terms of assembly, homodimer (predominantly) and homotetramer.

It localises to the cytoplasm. The enzyme catalyses hydrogencarbonate + NH4(+) + ATP = carbamoyl phosphate + ADP + H2O + H(+). Its pathway is metabolic intermediate metabolism; carbamoyl phosphate degradation; CO(2) and NH(3) from carbamoyl phosphate: step 1/1. Inhibited by adenosine(5')pentaphospho(5')adenosine (Ap5A), Ap6A and to a much lower extent by Ap4A. In terms of biological role, catalyzes the reversible synthesis of carbamate and ATP from carbamoyl phosphate and ADP. Can also catalyze, although with low efficiency, the phosphorylation of bicarbonate, leading to the formation of carboxyphosphate, an unstable intermediate found in the reactions catalyzed by carbamoyl-phosphate synthase and biotin carboxylase. Can also use acetate. This Enterococcus faecium (Streptococcus faecium) protein is Carbamate kinase 1 (arcC1).